Consider the following 438-residue polypeptide: MPEQVTDQENQAPQQQTTAVHAYNPEVLQDMLPVYYRRLFPHLPFYRWLSYGSSEDAIFSNREISFTLQDDIYIRYLCFDTQAELEKEICSRNPIKIDIGPVMHSKPKNHRSIPGGLTPVQRELVFDIDMTDYDEVRTCCSGAGVCLKCWKFMVLAARVLDVALREDFGFEHIIWIFSGRRGIHCWVCDYQARHLDGRGRYAVAEYLNIITYASFAGGNSPRCSMGDRPHHSLKRALKIVEPMFEEIVLEDQNLFGTPKGVTKLLNMVHDDAARGELESYMQKNLEDGAHSRLVWESFIKYANSMRTSTTSAWSRKLKNIVAEIQLGLLYPRLDINVTRGFNHLLKAPFCIHPATGKVCVPFSVSAVAKFDPTTVPTITQLLHEINAFDDKSKSYMEAPEDKSRIKDHKKTSMFKGVVVFEEFLRKLERSQKSASLQF.

Catalysis depends on residues E63, D127, and D129. The Zinc knuckle motif signature appears at 139 to 149; it reads CCSGAGVCLKC.

It belongs to the eukaryotic-type primase small subunit family. Heterodimer of a catalytic subunit Prim1 and a regulatory subunit Prim2, also known as the DNA primase complex. Component of the alpha DNA polymerase complex (also known as the alpha DNA polymerase-primase complex) consisting of four subunits: the catalytic subunit PolA1, the regulatory subunit PolA2, and the primase complex subunits Prim1 and Prim2 respectively. PolA1 associates with the DNA primase complex before association with PolA2. Requires Mg(2+) as cofactor. It depends on Mn(2+) as a cofactor. As to expression, expressed in embryos (at protein level).

With respect to regulation, the presence of the regulatory subunit Prim2 accelerates the kinetics of initiation and primer extension. Functionally, catalytic subunit of the DNA primase complex and component of the DNA polymerase alpha complex (also known as the alpha DNA polymerase-primase complex) which play an essential role in the initiation of DNA synthesis. During the S phase of the cell cycle, the DNA polymerase alpha complex (composed of a catalytic subunit PolA1, an accessory subunit PolA2 and two primase subunits, the catalytic subunit Prim1 and the regulatory subunit Prim2) is recruited to DNA at the replicative forks. The primase subunit of the polymerase alpha complex initiates DNA synthesis by oligomerising short RNA primers on both leading and lagging strands. These primers are initially extended by the polymerase alpha catalytic subunit and subsequently transferred to polymerase delta and polymerase epsilon for processive synthesis on the lagging and leading strand, respectively. In the primase complex, both subunits are necessary for the initial di-nucleotide formation, but the extension of the primer depends only on the catalytic subunit. Can add both ribo- and deoxynucleotides during elongation of the primers. Binds single stranded DNA. This chain is DNA primase small subunit, found in Drosophila melanogaster (Fruit fly).